Consider the following 122-residue polypeptide: Large ribosomal subunit protein bL17 (122 aa).

This sequence belongs to the bacterial ribosomal protein bL17 family. Part of the 50S ribosomal subunit. Contacts protein L32.

The protein is Large ribosomal subunit protein bL17 of Staphylococcus epidermidis (strain ATCC 35984 / DSM 28319 / BCRC 17069 / CCUG 31568 / BM 3577 / RP62A).